Reading from the N-terminus, the 463-residue chain is ATP-dependent protease ATPase subunit HslU (463 aa).

ATP is bound by residues Val19, 61-66 (GVGKTE), Asp277, Glu341, and Arg413.

Belongs to the ClpX chaperone family. HslU subfamily. A double ring-shaped homohexamer of HslV is capped on each side by a ring-shaped HslU homohexamer. The assembly of the HslU/HslV complex is dependent on binding of ATP.

It is found in the cytoplasm. Its function is as follows. ATPase subunit of a proteasome-like degradation complex; this subunit has chaperone activity. The binding of ATP and its subsequent hydrolysis by HslU are essential for unfolding of protein substrates subsequently hydrolyzed by HslV. HslU recognizes the N-terminal part of its protein substrates and unfolds these before they are guided to HslV for hydrolysis. The polypeptide is ATP-dependent protease ATPase subunit HslU (Shouchella clausii (strain KSM-K16) (Alkalihalobacillus clausii)).